A 433-amino-acid polypeptide reads, in one-letter code: N-lysine methyltransferase SMYD2 (433 aa).

An SET domain is found at 7 to 241; the sequence is GGLERFCSPG…PGEEVFTSYI (235 aa). 17–19 serves as a coordination point for S-adenosyl-L-methionine; it reads KGR. Zn(2+)-binding residues include C52, C55, C65, C68, C74, C78, H86, and C90. The segment at 52-90 adopts an MYND-type zinc-finger fold; that stretch reads CEFCFARKEGLSKCGRCKQAFYCNVECQREDWPMHKLEC. S-adenosyl-L-methionine is bound by residues H137, 206 to 207, and 258 to 260; these read NH and YFF.

The protein belongs to the class V-like SAM-binding methyltransferase superfamily. As to quaternary structure, interacts with RNA polymerase II and HELZ. Interacts with SIN3A and HDAC1. Interacts (via MYND-type zinc finger) with EPB41L3. Interacts (via SET domain) with p53/TP53. Interacts with RB1 and HSP90AA1.

The protein localises to the cytoplasm. It localises to the cytosol. Its subcellular location is the nucleus. It carries out the reaction L-lysyl(4)-[histone H3] + 3 S-adenosyl-L-methionine = N(6),N(6),N(6)-trimethyl-L-lysyl(4)-[histone H3] + 3 S-adenosyl-L-homocysteine + 3 H(+). It catalyses the reaction L-lysyl-[protein] + S-adenosyl-L-methionine = N(6)-methyl-L-lysyl-[protein] + S-adenosyl-L-homocysteine + H(+). Functionally, protein-lysine N-methyltransferase that methylates both histones and non-histone proteins, including p53/TP53 and RB1. Specifically trimethylates histone H3 'Lys-4' (H3K4me3) in vivo. The activity requires interaction with HSP90alpha. Shows even higher methyltransferase activity on p53/TP53. Monomethylates 'Lys-370' of p53/TP53, leading to decreased DNA-binding activity and subsequent transcriptional regulation activity of p53/TP53. Monomethylates RB1 at 'Lys-860'. This Bos taurus (Bovine) protein is N-lysine methyltransferase SMYD2 (SMYD2).